Consider the following 246-residue polypeptide: Glucosamine-6-phosphate deaminase (246 aa).

Residue Asp67 is the Proton acceptor; for enolization step of the active site. Asn136 acts as the For ring-opening step in catalysis. His138 (proton acceptor; for ring-opening step) is an active-site residue. The active-site For ring-opening step is the Glu143.

This sequence belongs to the glucosamine/galactosamine-6-phosphate isomerase family. NagB subfamily.

It catalyses the reaction alpha-D-glucosamine 6-phosphate + H2O = beta-D-fructose 6-phosphate + NH4(+). It functions in the pathway amino-sugar metabolism; N-acetylneuraminate degradation; D-fructose 6-phosphate from N-acetylneuraminate: step 5/5. In terms of biological role, catalyzes the reversible isomerization-deamination of glucosamine 6-phosphate (GlcN6P) to form fructose 6-phosphate (Fru6P) and ammonium ion. The chain is Glucosamine-6-phosphate deaminase from Halalkalibacterium halodurans (strain ATCC BAA-125 / DSM 18197 / FERM 7344 / JCM 9153 / C-125) (Bacillus halodurans).